The primary structure comprises 148 residues: Leghemoglobin-1 (148 aa).

Positions 2–146 (GFTDKQEALV…LATAIKKAMK (145 aa)) constitute a Globin domain. Residues Tyr-24 and Tyr-29 each carry the nitrated tyrosine modification. Ser-44 is a heme b binding site. Ser-44 is subject to Phosphoserine. His-61 is an O2 binding site. Positions 93 and 96 each coordinate heme b. A Nitrated tyrosine modification is found at Tyr-134.

The protein belongs to the plant globin family. As to quaternary structure, monomer. Post-translationally, nitrated in effective nodules and particularly in hypoxic conditions; this mechanism may play a protective role in the symbiosis by buffering toxic peroxynitrite NO(2)(-). Nitration level decrease during nodule senescence. In terms of processing, phosphorylation at Ser-44 disrupts the molecular environment of its porphyrin ring oxygen binding pocket, thus leading to a reduced oxygen consumption and to the delivery of oxygen O(2) to symbiosomes. In terms of tissue distribution, root nodules.

The protein resides in the cytoplasm. It is found in the cytosol. The protein localises to the nucleus. Leghemoglobin that reversibly binds oxygen O(2) through a pentacoordinated heme iron. In root nodules, facilitates the diffusion of oxygen to the bacteroids while preventing the bacterial nitrogenase from being inactivated by buffering dioxygen, nitric oxide and carbon monoxide, and promoting the formation of reactive oxygen species (ROS, e.g. H(2)O(2)). This role is essential for symbiotic nitrogen fixation (SNF). This Pisum sativum (Garden pea) protein is Leghemoglobin-1.